The following is a 361-amino-acid chain: Large ribosomal subunit protein uL3 (361 aa).

Residues 339 to 361 (RPPKKKPPVQRPQITYVSVESKQ) form a disordered region. Residues 350 to 361 (PQITYVSVESKQ) show a composition bias toward polar residues.

Belongs to the universal ribosomal protein uL3 family. Part of the 50S ribosomal subunit. Forms a cluster with proteins L14 and L24e.

Its function is as follows. One of the primary rRNA binding proteins, it binds directly near the 3'-end of the 23S rRNA, where it nucleates assembly of the 50S subunit. This chain is Large ribosomal subunit protein uL3, found in Pyrococcus abyssi (strain GE5 / Orsay).